The primary structure comprises 84 residues: U8-theraphotoxin-Hhn1b (84 aa).

An N-terminal signal peptide occupies residues 1 to 21 (MKVVLIVCLVWVMAMMELVSC). Disulfide bonds link Cys23–Cys35, Cys29–Cys44, Cys34–Cys67, and Cys54–Cys75.

The protein belongs to the AVIT (prokineticin) family. In terms of tissue distribution, expressed by the venom gland.

It is found in the secreted. This is U8-theraphotoxin-Hhn1b from Cyriopagopus hainanus (Chinese bird spider).